The primary structure comprises 358 residues: MTLETPVRVLIVDDSAVVRQMLTEILSRDAGIEVVGSAADPLLAREKIKRLNPDVITLDVEMPRMDGLVFLENLMRLRPTPVVMISSLTERGADTTLQALSLGAVDFVSKPKIDVARGLEGYAEEIVSKVKMAAKAKVSALHRPSAPKVTLDMQSAPMPGSALRFRTTDRLVAIGASAGGTEALRVVLEHMPADAPAVVMTQHLPASFSTAFAERLNRHSAMSVREATDGEAILPGHAYLPPGGQHLRIIRDGARWRCRIDDGPPVNRHKPAVDVLFRSVAANAGANAVGAILTGMGDDGARGLLEMLQAGAPTLVQDEASSVVWGMPGAAYKLGAAQEVVPLDRVAERLLALSAQAR.

One can recognise a Response regulatory domain in the interval 8 to 125; the sequence is RVLIVDDSAV…ARGLEGYAEE (118 aa). 4-aspartylphosphate is present on Asp59. The CheB-type methylesterase domain maps to 157–352; that stretch reads PMPGSALRFR…LDRVAERLLA (196 aa). Residues Ser177, His203, and Asp299 contribute to the active site.

It belongs to the CheB family. Phosphorylated by CheA. Phosphorylation of the N-terminal regulatory domain activates the methylesterase activity.

It is found in the cytoplasm. It catalyses the reaction [protein]-L-glutamate 5-O-methyl ester + H2O = L-glutamyl-[protein] + methanol + H(+). The enzyme catalyses L-glutaminyl-[protein] + H2O = L-glutamyl-[protein] + NH4(+). Its function is as follows. Involved in chemotaxis. Part of a chemotaxis signal transduction system that modulates chemotaxis in response to various stimuli. Catalyzes the demethylation of specific methylglutamate residues introduced into the chemoreceptors (methyl-accepting chemotaxis proteins or MCP) by CheR. Also mediates the irreversible deamidation of specific glutamine residues to glutamic acid. In Xanthomonas oryzae pv. oryzae (strain MAFF 311018), this protein is Protein-glutamate methylesterase/protein-glutamine glutaminase 2.